The chain runs to 154 residues: Transcriptional repressor NrdR (154 aa).

A zinc finger spans residues 3–34; sequence CPFCGNDETKVLESRQVEEGTAVRRRRECERC. The ATP-cone domain maps to 49–139; sequence LIVVKKDGRR…VYREFKDVQR (91 aa).

This sequence belongs to the NrdR family. It depends on Zn(2+) as a cofactor.

Negatively regulates transcription of bacterial ribonucleotide reductase nrd genes and operons by binding to NrdR-boxes. This chain is Transcriptional repressor NrdR, found in Desulfitobacterium hafniense (strain DSM 10664 / DCB-2).